A 216-amino-acid polypeptide reads, in one-letter code: Redox-sensing transcriptional repressor Rex (216 aa).

The segment at residues Gln20–Phe59 is a DNA-binding region (H-T-H motif). Residue Gly94–Gly99 coordinates NAD(+).

It belongs to the transcriptional regulatory Rex family. In terms of assembly, homodimer.

It localises to the cytoplasm. Functionally, modulates transcription in response to changes in cellular NADH/NAD(+) redox state. This is Redox-sensing transcriptional repressor Rex from Lactococcus lactis subsp. cremoris (strain SK11).